A 387-amino-acid polypeptide reads, in one-letter code: Phosphoglycerate kinase (387 aa).

Residues 21 to 23, Arg-36, 59 to 62, Arg-113, and Arg-146 contribute to the substrate site; these read DLN and HLGR. ATP contacts are provided by residues Lys-197, Glu-314, and 340 to 343; that span reads GGDT.

It belongs to the phosphoglycerate kinase family. As to quaternary structure, monomer.

The protein localises to the cytoplasm. The enzyme catalyses (2R)-3-phosphoglycerate + ATP = (2R)-3-phospho-glyceroyl phosphate + ADP. It functions in the pathway carbohydrate degradation; glycolysis; pyruvate from D-glyceraldehyde 3-phosphate: step 2/5. The protein is Phosphoglycerate kinase of Pseudomonas paraeruginosa (strain DSM 24068 / PA7) (Pseudomonas aeruginosa (strain PA7)).